A 71-amino-acid polypeptide reads, in one-letter code: Exodeoxyribonuclease 7 small subunit (71 aa).

It belongs to the XseB family. As to quaternary structure, heterooligomer composed of large and small subunits.

The protein resides in the cytoplasm. It carries out the reaction Exonucleolytic cleavage in either 5'- to 3'- or 3'- to 5'-direction to yield nucleoside 5'-phosphates.. Its function is as follows. Bidirectionally degrades single-stranded DNA into large acid-insoluble oligonucleotides, which are then degraded further into small acid-soluble oligonucleotides. This is Exodeoxyribonuclease 7 small subunit from Streptococcus pyogenes serotype M1.